The following is a 708-amino-acid chain: WD repeat-containing and planar cell polarity effector protein fritz homolog (708 aa).

WD repeat units follow at residues 303–342 (PLRSRVISCAVNTSEDKLVLGCEDSSLILYESDCKVTLLA) and 343–382 (QADLLPDLIRWHPNGTIFVVASSQGELQIFDMALSPIRAQ).

This sequence belongs to the WD repeat fritz family. As to quaternary structure, interacts with sept2-a. Interacts with intu and fuz; fuz, intu and wdpcp probably form the core CPLANE (ciliogenesis and planar polarity effectors) complex.

It localises to the cell membrane. The protein resides in the cytoplasm. It is found in the cytoskeleton. The protein localises to the cilium axoneme. Its subcellular location is the cilium basal body. In terms of biological role, probable effector of the planar cell polarity signaling pathway which regulates the septin cytoskeleton in both ciliogenesis and collective cell movements including covergent extension during gastrulation. Controls cell shape but not polarization during convergent extension. Proposed to function as core component of the CPLANE (ciliogenesis and planar polarity effectors) complex involved in the recruitment of peripheral IFT-A proteins to basal bodies. The sequence is that of WD repeat-containing and planar cell polarity effector protein fritz homolog (wdpcp) from Xenopus laevis (African clawed frog).